Reading from the N-terminus, the 454-residue chain is Isthmin-1 (454 aa).

A signal peptide spans 1-29; the sequence is MVRLAAELLLLLGLLLLTLHITVLRGSGA. Disordered regions lie at residues 29–93, 125–144, and 161–209; these read ASDR…PRSF, PDSE…WSLP, and TNSG…STDG. Residues 38–55 show a composition bias toward polar residues; sequence GNNNLNLESDSTSETSFP. Residues 128–137 are compositionally biased toward basic and acidic residues; sequence EAEKDQHPEN. Residues 208 to 252 enclose the TSP type-1 domain; sequence DGEGDWSLWSVCSVTCGNGNQKRTRSCGYACIATESRTCDRPNCP. Disulfide bonds link Cys219–Cys246, Cys223–Cys251, and Cys234–Cys238. Positions 279–442 constitute an AMOP domain; the sequence is LFEVDMDSCE…QKCTESPSDE (164 aa).

The protein belongs to the isthmin family. Interacts with integrin ITGAV/ITGB5.

It localises to the secreted. Acts as an angiogenesis inhibitor. The protein is Isthmin-1 (Ism1) of Mus musculus (Mouse).